We begin with the raw amino-acid sequence, 1159 residues long: Protocadherin-17 (1159 aa).

A signal peptide spans 1-17 (MYLSICCCFLLWAPALT). 6 Cadherin domains span residues 18–132 (LKNL…APSF), 133–243 (SSDQ…SPVF), 244–351 (EAPS…APSI), 353–472 (FVSV…PPRF), 473–583 (TKGL…APVI), and 589–695 (QNDT…VPRV). Residues 18-707 (LKNLNYSVPE…EQHHWDMSLP (690 aa)) are Extracellular-facing. An N-linked (GlcNAc...) asparagine glycan is attached at Asn-22. The Cell attachment site signature appears at 186–188 (RGD). 6 N-linked (GlcNAc...) asparagine glycosylation sites follow: Asn-266, Asn-439, Asn-453, Asn-504, Asn-566, and Asn-590. The chain crosses the membrane as a helical span at residues 708 to 728 (LIVTLSTISIILLAAMITIAV). At 729–1159 (KCKRENKEIR…RGNDPVAVRK (431 aa)) the chain is on the cytoplasmic side. Disordered stretches follow at residues 858–909 (NFPA…KGSC) and 1108–1132 (SRDS…GRES). The segment covering 867 to 879 (GSRQQFVQSSSTF) has biased composition (polar residues). Basic and acidic residues-rich tracts occupy residues 880-895 (KDPE…HGDS) and 1120-1132 (QLDH…GRES).

It is found in the cell membrane. Its function is as follows. Potential calcium-dependent cell-adhesion protein. The sequence is that of Protocadherin-17 (PCDH17) from Homo sapiens (Human).